Here is a 406-residue protein sequence, read N- to C-terminus: Phosphorylase b kinase gamma catalytic chain, liver/testis isoform (406 aa).

A Protein kinase domain is found at 24–291 (YDPKDVIGRG…AEQALQHPFF (268 aa)). ATP is bound by residues 30-38 (IGRGVSSVV) and Lys53. The Proton acceptor role is filled by Asp153. A calmodulin-binding (domain-N) region spans residues 306–330 (QRFRVAVWTVLAAGRVALSAHRIRP). The calmodulin-binding (domain-C) stretch occupies residues 346–370 (VRRLIDNCAFRLYGHWVKKGEQQNR).

Belongs to the protein kinase superfamily. CAMK Ser/Thr protein kinase family. Hexadecamer of 4 heterotetramers, each composed of alpha, beta, gamma, and delta subunits. Alpha (PHKA1 or PHKA2) and beta (PHKB) are regulatory subunits, gamma (PHKG1 or PHKG2) is the catalytic subunit, and delta is calmodulin.

The enzyme catalyses 2 ATP + phosphorylase b = 2 ADP + phosphorylase a.. Its function is as follows. Catalytic subunit of the phosphorylase b kinase (PHK), which mediates the neural and hormonal regulation of glycogen breakdown (glycogenolysis) by phosphorylating and thereby activating glycogen phosphorylase. May regulate glycogeneolysis in the testis. In vitro, phosphorylates PYGM. This chain is Phosphorylase b kinase gamma catalytic chain, liver/testis isoform (PHKG2), found in Bos taurus (Bovine).